A 776-amino-acid chain; its full sequence is Protein translocase subunit SecA 2 (776 aa).

Residues Q80, 98–102 (GEGKT), and D486 contribute to the ATP site.

Belongs to the SecA family. Monomer and homodimer. Part of the essential Sec protein translocation apparatus which comprises SecA, SecYEG and auxiliary proteins SecDF. Other proteins may also be involved.

It is found in the cell membrane. The protein localises to the cytoplasm. The catalysed reaction is ATP + H2O + cellular proteinSide 1 = ADP + phosphate + cellular proteinSide 2.. In terms of biological role, part of the Sec protein translocase complex. Interacts with the SecYEG preprotein conducting channel. Has a central role in coupling the hydrolysis of ATP to the transfer of proteins into and across the cell membrane, serving as an ATP-driven molecular motor driving the stepwise translocation of polypeptide chains across the membrane. This is Protein translocase subunit SecA 2 from Listeria monocytogenes serovar 1/2a (strain ATCC BAA-679 / EGD-e).